We begin with the raw amino-acid sequence, 542 residues long: MITPLTQRPAWKALEAHYQTIKGMHLRQLFADDPKRGERFTAEAVGLYLDYSKNRITDETLHLLVQLAEECGLRERIEAMFRGDAINVTEQRAVLHIALRAPRNEKILVDGNDVVPGVHAVLDRMADFSDKIRSGDWQGHTGKRIRNIINIGIGGSDLGPVMAYEALRHYSLHNLSFRFISNVDGTDFVEATRGLDPEETLFIICSKTFTTTETLANAHTARRWMLRQIKDLEGVRKHFVAVSTNAEEVARFGIDTANMFEFWDWVGGRYSMDSAIGLSTMIAVGPENFREMLAGFHAMDQHFYSAPFDRNLPVLMGLLSLWYNNFFGAQTLAVLPYEQYLKRFPAYLQQLTMESNGKHITLNGSQVDYQTSPIVWGEPGTNGQHSFYQLIHQGTRLIPCDFIGFCQTLNPLGDHHDLLMANLFAQTEALAFGKTEDEVKAEGVPDWLCPHRSFEGNRPTNTILAERLTPHTLGALVALYEQSVFTQGTIWQIDSFDQWGVELGKVLAHRIGQELEDENGKSLKHDSSTNALIQRYNRLKQK.

Glu-354 functions as the Proton donor in the catalytic mechanism. Catalysis depends on residues His-385 and Lys-505.

The protein belongs to the GPI family.

It localises to the cytoplasm. It carries out the reaction alpha-D-glucose 6-phosphate = beta-D-fructose 6-phosphate. It functions in the pathway carbohydrate biosynthesis; gluconeogenesis. It participates in carbohydrate degradation; glycolysis; D-glyceraldehyde 3-phosphate and glycerone phosphate from D-glucose: step 2/4. Functionally, catalyzes the reversible isomerization of glucose-6-phosphate to fructose-6-phosphate. The sequence is that of Glucose-6-phosphate isomerase from Nitrosospira multiformis (strain ATCC 25196 / NCIMB 11849 / C 71).